A 560-amino-acid polypeptide reads, in one-letter code: Putative transport protein VSAL_I2029 (560 aa).

Helical transmembrane passes span 14–34 (ILLL…KIGS), 37–57 (LGSS…GYTF), 66–86 (FMLF…GIFL), 94–114 (LLVL…GYYF), and 161–181 (NLSV…ILLA). RCK C-terminal domains follow at residues 203 to 292 (RGIG…FRNG) and 293 to 376 (KEVF…KIGF). 5 consecutive transmembrane segments (helical) span residues 386–406 (LLAF…TMSF), 409–429 (VTFG…LGFL), 451–471 (GLLV…IEYF), 478–498 (VLAA…LVGA), and 539–559 (AGTY…MILL).

This sequence belongs to the AAE transporter (TC 2.A.81) family. YbjL subfamily.

The protein localises to the cell membrane. This Aliivibrio salmonicida (strain LFI1238) (Vibrio salmonicida (strain LFI1238)) protein is Putative transport protein VSAL_I2029.